A 331-amino-acid polypeptide reads, in one-letter code: Biotin synthase (331 aa).

A Radical SAM core domain is found at 43-267; that stretch reads NTVQVSTLLS…LMPASYVRLS (225 aa). [4Fe-4S] cluster contacts are provided by Cys-58, Cys-62, and Cys-65. Cys-102, Cys-133, Cys-193, and Arg-265 together coordinate [2Fe-2S] cluster.

The protein belongs to the radical SAM superfamily. Biotin synthase family. Homodimer. It depends on [4Fe-4S] cluster as a cofactor. [2Fe-2S] cluster serves as cofactor.

The catalysed reaction is (4R,5S)-dethiobiotin + (sulfur carrier)-SH + 2 reduced [2Fe-2S]-[ferredoxin] + 2 S-adenosyl-L-methionine = (sulfur carrier)-H + biotin + 2 5'-deoxyadenosine + 2 L-methionine + 2 oxidized [2Fe-2S]-[ferredoxin]. It participates in cofactor biosynthesis; biotin biosynthesis; biotin from 7,8-diaminononanoate: step 2/2. Functionally, catalyzes the conversion of dethiobiotin (DTB) to biotin by the insertion of a sulfur atom into dethiobiotin via a radical-based mechanism. The protein is Biotin synthase of Alkalilimnicola ehrlichii (strain ATCC BAA-1101 / DSM 17681 / MLHE-1).